A 321-amino-acid polypeptide reads, in one-letter code: Lipoyl synthase (321 aa).

The [4Fe-4S] cluster site is built by Cys68, Cys73, Cys79, Cys94, Cys98, Cys101, and Ser308. The Radical SAM core domain maps to 80-297; the sequence is FNHGTATFMI…KALADELGFT (218 aa).

Belongs to the radical SAM superfamily. Lipoyl synthase family. Requires [4Fe-4S] cluster as cofactor.

The protein resides in the cytoplasm. It carries out the reaction [[Fe-S] cluster scaffold protein carrying a second [4Fe-4S](2+) cluster] + N(6)-octanoyl-L-lysyl-[protein] + 2 oxidized [2Fe-2S]-[ferredoxin] + 2 S-adenosyl-L-methionine + 4 H(+) = [[Fe-S] cluster scaffold protein] + N(6)-[(R)-dihydrolipoyl]-L-lysyl-[protein] + 4 Fe(3+) + 2 hydrogen sulfide + 2 5'-deoxyadenosine + 2 L-methionine + 2 reduced [2Fe-2S]-[ferredoxin]. It participates in protein modification; protein lipoylation via endogenous pathway; protein N(6)-(lipoyl)lysine from octanoyl-[acyl-carrier-protein]: step 2/2. In terms of biological role, catalyzes the radical-mediated insertion of two sulfur atoms into the C-6 and C-8 positions of the octanoyl moiety bound to the lipoyl domains of lipoate-dependent enzymes, thereby converting the octanoylated domains into lipoylated derivatives. The chain is Lipoyl synthase from Shewanella oneidensis (strain ATCC 700550 / JCM 31522 / CIP 106686 / LMG 19005 / NCIMB 14063 / MR-1).